A 131-amino-acid chain; its full sequence is Holo-[acyl-carrier-protein] synthase (131 aa).

Mg(2+) contacts are provided by D8 and E59.

This sequence belongs to the P-Pant transferase superfamily. AcpS family. Mg(2+) serves as cofactor.

The protein resides in the cytoplasm. The enzyme catalyses apo-[ACP] + CoA = holo-[ACP] + adenosine 3',5'-bisphosphate + H(+). Its function is as follows. Transfers the 4'-phosphopantetheine moiety from coenzyme A to a Ser of acyl-carrier-protein. In Rickettsia africae (strain ESF-5), this protein is Holo-[acyl-carrier-protein] synthase.